Here is an 89-residue protein sequence, read N- to C-terminus: Large ribosomal subunit protein bL27 (89 aa).

A disordered region spans residues 1-21; the sequence is MAHKKAGGSSRNGRDSAGRRL.

It belongs to the bacterial ribosomal protein bL27 family.

In Novosphingobium aromaticivorans (strain ATCC 700278 / DSM 12444 / CCUG 56034 / CIP 105152 / NBRC 16084 / F199), this protein is Large ribosomal subunit protein bL27.